Here is a 3146-residue protein sequence, read N- to C-terminus: Bassianolide nonribosomal cyclodepsipeptide synthetase (3146 aa).

The span at 1-12 shows a compositional bias: polar residues; it reads MEPPNNANTGQL. Positions 1–23 are disordered; the sequence is MEPPNNANTGQLGPTLPNGTVDL. The tract at residues 69 to 454 is condensation 1; that stretch reads HVVYEIPEDV…INKLQSTDGS (386 aa). The tract at residues 495–887 is adenylation 1; the sequence is GDTPNKPAVC…GRMDSQVKIR (393 aa). One can recognise a Carrier 1 domain in the interval 1015–1091; that stretch reads PDASAGVTKL…SLQAAIGGSS (77 aa). The residue at position 1052 (serine 1052) is an O-(pantetheine 4'-phosphoryl)serine. The interval 1109–1538 is condensation 2; sequence SYSQGRLWFL…QTLISVVPLT (430 aa). The tract at residues 1567 to 1973 is adenylation 2; it reads FRTQVASYPD…GRMDFQFKIR (407 aa). The segment at 2041-2181 is S-adenosyl-L-methionine-dependent N-methyltransferase (MT); it reads TYTELDTVSS…FPTRDYLERV (141 aa). Carrier domains follow at residues 2514–2588 and 2614–2688; these read FPLS…RQQL and APTT…EVSQ. Residues serine 2548 and serine 2648 each carry the O-(pantetheine 4'-phosphoryl)serine modification. The interval 2734-3138 is condensation 3; sequence QDVYLATHLQ…THLMEQVCNT (405 aa).

Belongs to the NRP synthetase family.

It carries out the reaction 4 (R)-2-hydroxy-3-methylbutanoate + 4 L-leucine + 4 S-adenosyl-L-methionine + 8 ATP = bassianolide + 8 AMP + 4 S-adenosyl-L-homocysteine + 8 diphosphate + 8 H(+). Its function is as follows. Bassianolide nonribosomal synthetase that mediates the biosynthesis of bassianolide (BSL), a non-ribosomal cyclodepsipeptide that shows insecticidal and cancer cell antiproliferative activity. BSLS first catalyzes the iterative synthesis of an enzyme-bound dipeptidol monomer intermediate from D-2-hydroxyisovalerate and L-leucine before performing the condensation and cyclization of 4 dipeptidol monomers to yield the cyclic tetrameric ester bassianolide. The N-methyltransferase MT domain is responsible for the methylation of the leucine residues of bassianolide. BSLS is flexible with both the amino acid and hydroxyl acid precursors, and produces bassianolide as the major product (containing N-methyl-L-Leu), together with small amounts of beauvericin and its analogs beauvericins A-C (containing N-methyl-L-Phe). This is Bassianolide nonribosomal cyclodepsipeptide synthetase from Beauveria bassiana (White muscardine disease fungus).